A 94-amino-acid chain; its full sequence is HssA/B-like protein 51 (94 aa).

The tract at residues 1 to 25 (MTLFSSISSISNPMTNSKSRISSFG) is disordered.

This sequence belongs to the hssA/B family.

This chain is HssA/B-like protein 51 (hssl51), found in Dictyostelium discoideum (Social amoeba).